The primary structure comprises 239 residues: Serine protease SplF (239 aa).

An N-terminal signal peptide occupies residues M1–A36. Residues H75, D114, and S192 each act as charge relay system in the active site.

The protein belongs to the peptidase S1B family.

It localises to the secreted. This Staphylococcus aureus (strain MSSA476) protein is Serine protease SplF (splF).